The sequence spans 181 residues: uncharacterized protein (181 aa).

Belongs to the methyltransferase superfamily.

This is an uncharacterized protein from Bacillus subtilis (strain 168).